The following is a 325-amino-acid chain: Small ribosomal subunit protein uS2 (325 aa).

Over residues 212–226 the composition is skewed to basic and acidic residues; it reads KEEQAKAEAERERLA. Residues 212–325 form a disordered region; sequence KEEQAKAEAE…TEPKASTGNW (114 aa). Low complexity-rich tracts occupy residues 234 to 247 and 261 to 289; these read QPAA…QWAD and PVTT…TGSG. Residues 290 to 300 show a composition bias toward polar residues; sequence FNQDDWSVPTT.

The protein belongs to the universal ribosomal protein uS2 family. Component of the small ribosomal subunit. Mature ribosomes consist of a small (40S) and a large (60S) subunit. The 40S subunit contains about 33 different proteins and 1 molecule of RNA (18S). The 60S subunit contains about 49 different proteins and 3 molecules of RNA (28S, 5.8S and 5S). Interacts with ribosomal protein S21.

Its subcellular location is the cytoplasm. In terms of biological role, required for the assembly and/or stability of the 40S ribosomal subunit. Required for the processing of the 20S rRNA-precursor to mature 18S rRNA in a late step of the maturation of 40S ribosomal subunits. This chain is Small ribosomal subunit protein uS2, found in Suberites domuncula (Sponge).